The sequence spans 337 residues: Glycerol-3-phosphate dehydrogenase [NAD(P)+] (337 aa).

4 residues coordinate NADPH: S17, Y18, H38, and K112. Sn-glycerol 3-phosphate contacts are provided by K112, G141, and T143. An NADPH-binding site is contributed by A145. Sn-glycerol 3-phosphate is bound by residues K197, D250, S260, R261, and N262. K197 (proton acceptor) is an active-site residue. NADPH is bound at residue R261. 2 residues coordinate NADPH: V285 and E287.

Belongs to the NAD-dependent glycerol-3-phosphate dehydrogenase family.

It is found in the cytoplasm. The enzyme catalyses sn-glycerol 3-phosphate + NAD(+) = dihydroxyacetone phosphate + NADH + H(+). It carries out the reaction sn-glycerol 3-phosphate + NADP(+) = dihydroxyacetone phosphate + NADPH + H(+). Its pathway is membrane lipid metabolism; glycerophospholipid metabolism. Catalyzes the reduction of the glycolytic intermediate dihydroxyacetone phosphate (DHAP) to sn-glycerol 3-phosphate (G3P), the key precursor for phospholipid synthesis. The polypeptide is Glycerol-3-phosphate dehydrogenase [NAD(P)+] (Pasteurella multocida (strain Pm70)).